Here is a 104-residue protein sequence, read N- to C-terminus: Cell division protein FtsL (104 aa).

Residues 1 to 20 (MSKPSLTLPRIVLHDLWQHK) lie on the Cytoplasmic side of the membrane. A helical transmembrane segment spans residues 21–43 (WILLLALLVLSNAVAVVYTSHVS). Residues 44-104 (RKLTTEWDQL…PSEEIVVKVP (61 aa)) are Periplasmic-facing.

It belongs to the FtsL family. As to quaternary structure, part of a complex composed of FtsB, FtsL and FtsQ.

It is found in the cell inner membrane. Functionally, essential cell division protein. May link together the upstream cell division proteins, which are predominantly cytoplasmic, with the downstream cell division proteins, which are predominantly periplasmic. This Shewanella oneidensis (strain ATCC 700550 / JCM 31522 / CIP 106686 / LMG 19005 / NCIMB 14063 / MR-1) protein is Cell division protein FtsL.